Consider the following 377-residue polypeptide: Dehydrogenase/reductase SDR family member 13 (377 aa).

The first 25 residues, 1-25, serve as a signal peptide directing secretion; it reads MEALLLGVGLLLGAYVLVYYNLVKA. Residues S46 and I48 each coordinate NAD(+). Residue S170 coordinates substrate. 3 residues coordinate NAD(+): Y197, K201, and S232. Y197 serves as the catalytic Proton acceptor. The segment at 310-363 is disordered; the sequence is LAGLGPGEDAESDEDSQPEDPGTPSSPSSPHPEEPTVSELYPSPQSSTDRSTVT. A compositionally biased stretch (acidic residues) spans 317–327; sequence EDAESDEDSQP. Residues 328–337 show a composition bias toward low complexity; that stretch reads EDPGTPSSPS. The segment covering 352-363 has biased composition (polar residues); it reads SPQSSTDRSTVT.

The protein belongs to the short-chain dehydrogenases/reductases (SDR) family.

Its subcellular location is the secreted. Its function is as follows. Putative oxidoreductase. This chain is Dehydrogenase/reductase SDR family member 13 (DHRS13), found in Bos taurus (Bovine).